We begin with the raw amino-acid sequence, 152 residues long: UPF0178 protein NIS_0137 (152 aa).

The protein belongs to the UPF0178 family.

The protein is UPF0178 protein NIS_0137 of Nitratiruptor sp. (strain SB155-2).